A 1278-amino-acid polypeptide reads, in one-letter code: Dynactin subunit 1 (1278 aa).

Residues 1-25 (MAQSKRHVYSRTPSGSRMSAEASAR) are disordered. Positions 48-90 (GATLFATGKWVGVILDEAKGKNDGTVQGRKYFTCDEGHGIFVR) constitute a CAP-Gly domain. The interval 100–223 (GADTTSPETP…SKEEEGLRAQ (124 aa)) is disordered. Residues 102-114 (DTTSPETPDSSAS) are compositionally biased toward polar residues. Position 108 is a phosphothreonine (Thr-108). Residues 129-152 (SKLRGLKPKKAPTARKTTTRRPKP) are compositionally biased toward basic residues. Residues Thr-145, Thr-146, and Thr-147 each carry the phosphothreonine; by SLK modification. Residues 161-184 (AGASSSLGPSGSASAGELSSSEPS) are compositionally biased toward low complexity. Phosphoserine; by PLK1 is present on Ser-179. Ser-212 carries the phosphoserine; by CDK1 modification. Coiled coils occupy residues 213–547 (PSKE…RQQQ), 943–1049 (LKLE…EGLR), and 1182–1211 (SAQL…KETV). Over residues 214 to 223 (SKEEEGLRAQ) the composition is skewed to basic and acidic residues. Positions 911–1278 (EYDAERPPSK…LHQLHSRLIS (368 aa)) are interaction with HPS6.

This sequence belongs to the dynactin 150 kDa subunit family. As to quaternary structure, monomer and homodimer. Subunit of dynactin, a multiprotein complex part of a tripartite complex with dynein and a adapter, such as BICDL1, BICD2 or HOOK3. The dynactin complex is built around ACTR1A/ACTB filament and consists of an actin-related filament composed of a shoulder domain, a pointed end and a barbed end. Its length is defined by its flexible shoulder domain. The soulder is composed of 2 DCTN1 subunits, 4 DCTN2 and 2 DCTN3. DCTN1/p150(glued) binds directly to microtubules and to cytoplasmic dynein. The 4 DCNT2 (via N-terminus) bind the ACTR1A filament and act as molecular rulers to determine the length. The pointed end is important for binding dynein-dynactin cargo adapters. Consists of 4 subunits: ACTR10, DCNT4, DCTN5 and DCTN6. The barbed end is composed of a CAPZA1:CAPZB heterodimers, which binds ACTR1A/ACTB filament and dynactin and stabilizes dynactin. Interacts with the C-terminus of MAPRE1, MAPRE2 and MAPRE3. Interacts (via C-terminus) with SNX6. Interacts with CLN3, DYNAP, ECPAS and FBXL5. Interacts with MISP; this interaction regulates its distribution at the cell cortex. Interacts with CEP131. Interacts with CEP126. Interacts with CLIP1. Interacts with dynein intermediate chain and dynein heavy chain. Interacts with PLK1 (via POLO-box domain). Interacts with TBCB. Binds preferentially to tyrosinated microtubules than to detyrosinated microtubules. Interacts with PARD6A. Interacts with HPS6. Interacts with KIF3A. Interacts with BICD2. Interacts with DST (isoform 9). Interacts with DST (isoform 1). Identified in a complex with MREG and RILP. Interacts with BCCIP (isoform 2/alpha). Interacts with DCDC1. Interacts with AKNA. Interacts with DYNC1I2. Interacts with RUFY3 and RUFY4. Ubiquitinated by a SCF complex containing FBXL5, leading to its degradation by the proteasome. In terms of processing, phosphorylation by SLK at Thr-145, Thr-146 and Thr-147 targets DCTN1 to the centrosome. It is uncertain if SLK phosphorylates all three threonines or one or two of them. PLK1-mediated phosphorylation at Ser-179 is essential for its localization in the nuclear envelope, promotes its dissociation from microtubules during early mitosis and positively regulates nuclear envelope breakdown during prophase. In terms of tissue distribution, brain.

The protein resides in the cytoplasm. The protein localises to the cytoskeleton. It is found in the microtubule organizing center. Its subcellular location is the centrosome. It localises to the centriole. The protein resides in the spindle. The protein localises to the nucleus envelope. It is found in the cell cortex. Its function is as follows. Part of the dynactin complex that activates the molecular motor dynein for ultra-processive transport along microtubules. Plays a key role in dynein-mediated retrograde transport of vesicles and organelles along microtubules by recruiting and tethering dynein to microtubules. Binds to both dynein and microtubules providing a link between specific cargos, microtubules and dynein. Essential for targeting dynein to microtubule plus ends, recruiting dynein to membranous cargos and enhancing dynein processivity (the ability to move along a microtubule for a long distance without falling off the track). Can also act as a brake to slow the dynein motor during motility along the microtubule. Can regulate microtubule stability by promoting microtubule formation, nucleation and polymerization and by inhibiting microtubule catastrophe in neurons. Inhibits microtubule catastrophe by binding both to microtubules and to tubulin, leading to enhanced microtubule stability along the axon. Plays a role in metaphase spindle orientation. Plays a role in centriole cohesion and subdistal appendage organization and function. Its recruitment to the centriole in a KIF3A-dependent manner is essential for the maintenance of centriole cohesion and the formation of subdistal appendage. Also required for microtubule anchoring at the mother centriole. Plays a role in primary cilia formation. In Homo sapiens (Human), this protein is Dynactin subunit 1.